We begin with the raw amino-acid sequence, 122 residues long: T cell receptor gamma variable 9 (122 aa).

The N-terminal stretch at methionine 1–glycine 20 is a signal peptide. Residues proline 27–valine 122 form the Ig-like domain. Cysteine 43 and cysteine 117 form a disulfide bridge.

In terms of assembly, gamma-delta TR is a heterodimer composed of a gamma and delta chain; disulfide-linked. The gamma-delta TR is associated with the transmembrane signaling CD3 coreceptor proteins following the stoichiometry: a single gamma-delta TR heterodimer associates with one CD3D-CD3E heterodimer, one CD3G-CD3E heterodimer and one CD247 homodimer forming a stable octameric structure. Upon activation, gamma-delta TR complex associates with FCER1G to initiate intracellular signaling.

The protein resides in the cell membrane. V region of the variable domain of T cell receptor (TR) gamma chain that participates in the antigen recognition. Gamma-delta TRs recognize a variety of self and foreign non-peptide antigens frequently expressed at the epithelial boundaries between the host and external environment, including endogenous lipids presented by MH-like protein CD1D and phosphoantigens presented by butyrophilin-like molecule BTN3A1. Upon antigen recognition induces rapid, innate-like immune responses involved in pathogen clearance and tissue repair. Binding of gamma-delta TR complex to antigen triggers phosphorylation of immunoreceptor tyrosine-based activation motifs (ITAMs) in the CD3 chains by the LCK and FYN kinases, allowing the recruitment, phosphorylation, and activation of ZAP70 that facilitates phosphorylation of the scaffolding proteins LCP2 and LAT. This lead to the formation of a supramolecular signalosome that recruits the phospholipase PLCG1, resulting in calcium mobilization and ERK activation, ultimately leading to T cell expansion and differentiation into effector cells. Gamma-delta TRs are produced through somatic rearrangement of a limited repertoire of variable (V), diversity (D), and joining (J) genes. The potential diversity of gamma-delta TRs is conferred by the unique ability to rearrange (D) genes in tandem and to utilize all three reading frames. The combinatorial diversity is considerably increased by the sequence exonuclease trimming and random nucleotide (N) region additions which occur during the V-(D)-J rearrangements. This chain is T cell receptor gamma variable 9, found in Homo sapiens (Human).